The sequence spans 83 residues: Cytochrome b559 subunit alpha (83 aa).

A helical membrane pass occupies residues 21 to 35 (VIHSITIPSLFIAGW). Histidine 23 is a heme binding site.

It belongs to the PsbE/PsbF family. As to quaternary structure, heterodimer of an alpha subunit and a beta subunit. PSII is composed of 1 copy each of membrane proteins PsbA, PsbB, PsbC, PsbD, PsbE, PsbF, PsbH, PsbI, PsbJ, PsbK, PsbL, PsbM, PsbT, PsbX, PsbY, PsbZ, Psb30/Ycf12, at least 3 peripheral proteins of the oxygen-evolving complex and a large number of cofactors. It forms dimeric complexes. The cofactor is heme b.

The protein localises to the plastid. It is found in the chloroplast thylakoid membrane. Its function is as follows. This b-type cytochrome is tightly associated with the reaction center of photosystem II (PSII). PSII is a light-driven water:plastoquinone oxidoreductase that uses light energy to abstract electrons from H(2)O, generating O(2) and a proton gradient subsequently used for ATP formation. It consists of a core antenna complex that captures photons, and an electron transfer chain that converts photonic excitation into a charge separation. The polypeptide is Cytochrome b559 subunit alpha (Physcomitrium patens (Spreading-leaved earth moss)).